A 209-amino-acid chain; its full sequence is Ferritin heavy chain (209 aa).

Positions 1–27 (MMKSVFFGVVAITVAILSIYQETAQAQ) are cleaved as a signal peptide. Residues 40-193 (DSVDDQCLAA…EKIATLKKMK (154 aa)) form the Ferritin-like diiron domain. Positions 57, 92, 95, 140, and 175 each coordinate Fe cation.

It belongs to the ferritin family. Oligomer of 24 subunits. There are two types of subunits: L (light) chain and H (heavy) chain. The functional molecule forms a roughly spherical shell with a diameter of 12 nm and contains a central cavity into which the insoluble mineral iron core is deposited.

It localises to the secreted. It is found in the cytoplasm. It carries out the reaction 4 Fe(2+) + O2 + 4 H(+) = 4 Fe(3+) + 2 H2O. Its function is as follows. Stores iron in a soluble, non-toxic, readily available form. Important for iron homeostasis. Has ferroxidase activity. Iron is taken up in the ferrous form and deposited as ferric hydroxides after oxidation. This Aedes aegypti (Yellowfever mosquito) protein is Ferritin heavy chain (FERH).